Here is a 189-residue protein sequence, read N- to C-terminus: UPF0301 protein PP_4995 (189 aa).

It belongs to the UPF0301 (AlgH) family.

In Pseudomonas putida (strain ATCC 47054 / DSM 6125 / CFBP 8728 / NCIMB 11950 / KT2440), this protein is UPF0301 protein PP_4995.